The sequence spans 277 residues: Orotidine 5'-phosphate decarboxylase (277 aa).

Residues Asp40, 62-64 (KTH), 93-102 (DRKFIDIGNT), Tyr229, and Arg247 each bind substrate. Residue Lys95 is the Proton donor of the active site.

It belongs to the OMP decarboxylase family.

It catalyses the reaction orotidine 5'-phosphate + H(+) = UMP + CO2. Its pathway is pyrimidine metabolism; UMP biosynthesis via de novo pathway; UMP from orotate: step 2/2. The sequence is that of Orotidine 5'-phosphate decarboxylase (pyrG) from Aspergillus kawachii (White koji mold).